The chain runs to 486 residues: PTS system N-acetylmuramic acid-specific EIIBC component (486 aa).

Positions 1–89 constitute a PTS EIIB type-1 domain; sequence MAKITQTMIS…NKLIESVING (89 aa). Residue C28 is the Phosphocysteine intermediate; for EIIB activity of the active site. Residues 127–486 enclose the PTS EIIC type-1 domain; sequence SKFATIFTPL…FFGSKDVDLS (360 aa). 10 consecutive transmembrane segments (helical) span residues 129–149, 170–190, 196–216, 230–250, 268–288, 312–332, 347–367, 381–401, 411–431, and 453–473; these read FATIFTPLIPGFIAAGLLLGF, LIAYMKVFGKGLFAFLSILIG, AFGGSGVNGAILASLFVLGYN, FFGYTIDPRGNIIGVLLAAII, MILTSVVTLLIMGVITFVVIM, AAILAGLFLISVVFGIHQGFV, LFPILAMAGGGQVGASLALYF, GAIIPGILGIGEPLIYGVTLP, IGGAAGGFFIGLVSYLGLPVG, and IFAGMAVFVVGLLISYVVGFL.

It is found in the cell inner membrane. It catalyses the reaction N-acetyl-beta-D-muramate(out) + N(pros)-phospho-L-histidyl-[protein] = N-acetyl-beta-D-muramate 6-phosphate(in) + L-histidyl-[protein]. Its function is as follows. The phosphoenolpyruvate-dependent sugar phosphotransferase system (sugar PTS), a major carbohydrate active transport system, catalyzes the phosphorylation of incoming sugar substrates concomitantly with their translocation across the cell membrane. This system is involved in N-acetylmuramic acid (MurNAc) transport, yielding cytoplasmic MurNAc-6-P. Is also able to take up anhydro-N-acetylmuramic acid (anhMurNAc), but cannot phosphorylate the carbon 6, probably because of the 1,6-anhydro ring. The polypeptide is PTS system N-acetylmuramic acid-specific EIIBC component (murP) (Vibrio vulnificus (strain CMCP6)).